Reading from the N-terminus, the 547-residue chain is MKRARFEDDFNPVYPYEHYNPLDIPFITPPFASSNGLQEKPPGVLSLKYTDPLTTKNGALTLKLGTGLNIDKNGDLSSDASVEVSAPITKTNKIVGLNYTKPLALQNNALTLSYNAPFNVVNNNLALNMSQPVTINANNELSLLIDAPLNADTGTLRLRSDAPLGLVDKTLKVLFSSPLYLDNNFLTLAIERPLALSSNRAVALKYSPPLKIENENLTLSTGGPFTVSGGNLNLATSAPLSVQNNSLSLGVNPPFLITDSGLAMDLGDGLALGGSKLIINLGPGLQMSNGAITLALDAALPLQYKNNQLQLRIGSASALIMSGVTQTLNVNANTSKGLAIENNSLVVKLGNGLRFDSWGSIAVSPTTTTPTTLWTTADPSPNATFYESLDAKVWLVLVKCNGMVNGTISIKAQKGTLLKPTASFISFVMYFYSDGTWRKNYPVFDNEGILANSATWGYRQGQSANTNVSNAVEFMPSSKRYPNEKGSEVQNMALTYTFLQGDPNMAISFQSIYNHAIEGYSLKFTWRVRNNERFDIPCCSFSYVTEQ.

It belongs to the adenoviridae fiber family. As to quaternary structure, homotrimer. Interacts with host receptor CXCAR. Interacts (via N-terminal tail region) with pentons.

It localises to the virion. It is found in the host nucleus. Its function is as follows. Forms spikes that protrude from each vertex of the icosahedral capsid. Interacts with host receptor CXCAR to provide virion initial attachment to target cell. Fiber proteins are shed during virus entry, when virus is still at the cell surface. This chain is Fiber protein 1, found in Human adenovirus F serotype 40 (HAdV-40).